Consider the following 89-residue polypeptide: Ubiquinol-cytochrome-c reductase complex assembly factor 3 (89 aa).

At 1–7 (MEAARKA) the chain is on the mitochondrial matrix side. A helical transmembrane segment spans residues 8–28 (LAVVAVLGAGGGVGSILFALV). Residues 23-80 (ILFALVTPGELQKQLMLQEMPERDSRRRDEAVRTKELVMATLKDAAATKENVAWRRNW) are mediates lipid-binding. Residues 29 to 89 (TPGELQKQLM…WTVRGDGRSA (61 aa)) lie on the Mitochondrial intermembrane side of the membrane.

Belongs to the UQCC3 family. Associates with the ubiquinol-cytochrome c reductase complex (mitochondrial respiratory chain complex III(CIII) or cytochrome b-c1 complex). Interacts with UQCC1. Forms a complex, named COMC, composed of UQCC1, UQCC2; UQCC3 and UQCC4; mediates MT-CYB hemylation and association with the first nuclear-encoded complex III subunit UQCRQ. Post-translationally, probably cleaved by OMA1 under mitochondrial stress conditions.

It is found in the mitochondrion inner membrane. Required for the assembly of the ubiquinol-cytochrome c reductase complex (mitochondrial respiratory chain complex III or cytochrome b-c1 complex), mediating cytochrome b recruitment and probably stabilization within the complex. Thereby, plays an important role in ATP production by mitochondria. Cardiolipin-binding protein, it may also control the cardiolipin composition of mitochondria membranes and their morphology. This chain is Ubiquinol-cytochrome-c reductase complex assembly factor 3, found in Rattus norvegicus (Rat).